The following is a 196-amino-acid chain: ATP-dependent Clp protease proteolytic subunit (196 aa).

S98 acts as the Nucleophile in catalysis. The active site involves H123.

It belongs to the peptidase S14 family. Fourteen ClpP subunits assemble into 2 heptameric rings which stack back to back to give a disk-like structure with a central cavity, resembling the structure of eukaryotic proteasomes.

It localises to the cytoplasm. It carries out the reaction Hydrolysis of proteins to small peptides in the presence of ATP and magnesium. alpha-casein is the usual test substrate. In the absence of ATP, only oligopeptides shorter than five residues are hydrolyzed (such as succinyl-Leu-Tyr-|-NHMec, and Leu-Tyr-Leu-|-Tyr-Trp, in which cleavage of the -Tyr-|-Leu- and -Tyr-|-Trp bonds also occurs).. Its function is as follows. Cleaves peptides in various proteins in a process that requires ATP hydrolysis. Has a chymotrypsin-like activity. Plays a major role in the degradation of misfolded proteins. This is ATP-dependent Clp protease proteolytic subunit from Anoxybacillus flavithermus (strain DSM 21510 / WK1).